The following is a 56-amino-acid chain: Large ribosomal subunit protein bL33 (56 aa).

It belongs to the bacterial ribosomal protein bL33 family.

In Delftia acidovorans (strain DSM 14801 / SPH-1), this protein is Large ribosomal subunit protein bL33.